The chain runs to 43 residues: Potassium channel toxin gamma-KTx 4.9 (43 aa).

4 disulfides stabilise this stretch: Cys5/Cys23, Cys11/Cys34, Cys20/Cys39, and Cys24/Cys41.

It belongs to the ergtoxin family. Gamma-KTx 4 subfamily. In terms of tissue distribution, expressed by the venom gland.

It localises to the secreted. In terms of biological role, reversibly blocks Kv11/ERG potassium channels. In Centruroides sculpturatus (Arizona bark scorpion), this protein is Potassium channel toxin gamma-KTx 4.9.